Consider the following 379-residue polypeptide: Glutamate 5-kinase (379 aa).

Lysine 19 lines the ATP pocket. Positions 59, 146, and 158 each coordinate substrate. 178–179 (TD) is an ATP binding site. The PUA domain maps to 285–363 (RGAVTVDAGA…SEFERLLGYV (79 aa)).

Belongs to the glutamate 5-kinase family.

The protein localises to the cytoplasm. It catalyses the reaction L-glutamate + ATP = L-glutamyl 5-phosphate + ADP. It functions in the pathway amino-acid biosynthesis; L-proline biosynthesis; L-glutamate 5-semialdehyde from L-glutamate: step 1/2. In terms of biological role, catalyzes the transfer of a phosphate group to glutamate to form L-glutamate 5-phosphate. The sequence is that of Glutamate 5-kinase from Variovorax paradoxus (strain S110).